The sequence spans 616 residues: Dihydroxy-acid dehydratase (616 aa).

Aspartate 81 serves as a coordination point for Mg(2+). [2Fe-2S] cluster is bound at residue cysteine 122. Mg(2+)-binding residues include aspartate 123 and lysine 124. Lysine 124 is modified (N6-carboxylysine). [2Fe-2S] cluster is bound at residue cysteine 195. Glutamate 491 is a binding site for Mg(2+). The Proton acceptor role is filled by serine 517.

The protein belongs to the IlvD/Edd family. As to quaternary structure, homodimer. [2Fe-2S] cluster is required as a cofactor. The cofactor is Mg(2+).

The catalysed reaction is (2R)-2,3-dihydroxy-3-methylbutanoate = 3-methyl-2-oxobutanoate + H2O. The enzyme catalyses (2R,3R)-2,3-dihydroxy-3-methylpentanoate = (S)-3-methyl-2-oxopentanoate + H2O. It functions in the pathway amino-acid biosynthesis; L-isoleucine biosynthesis; L-isoleucine from 2-oxobutanoate: step 3/4. The protein operates within amino-acid biosynthesis; L-valine biosynthesis; L-valine from pyruvate: step 3/4. In terms of biological role, functions in the biosynthesis of branched-chain amino acids. Catalyzes the dehydration of (2R,3R)-2,3-dihydroxy-3-methylpentanoate (2,3-dihydroxy-3-methylvalerate) into 2-oxo-3-methylpentanoate (2-oxo-3-methylvalerate) and of (2R)-2,3-dihydroxy-3-methylbutanoate (2,3-dihydroxyisovalerate) into 2-oxo-3-methylbutanoate (2-oxoisovalerate), the penultimate precursor to L-isoleucine and L-valine, respectively. This chain is Dihydroxy-acid dehydratase, found in Yersinia pseudotuberculosis serotype I (strain IP32953).